We begin with the raw amino-acid sequence, 288 residues long: Diaminopimelate epimerase (288 aa).

The substrate site is built by asparagine 14 and asparagine 67. Cysteine 76 serves as the catalytic Proton donor. Substrate is bound by residues 77–78 (GN), asparagine 166, asparagine 199, and 217–218 (ER). Cysteine 226 serves as the catalytic Proton acceptor. Position 227 to 228 (227 to 228 (GT)) interacts with substrate.

It belongs to the diaminopimelate epimerase family. As to quaternary structure, homodimer.

The protein resides in the cytoplasm. The catalysed reaction is (2S,6S)-2,6-diaminopimelate = meso-2,6-diaminopimelate. The protein operates within amino-acid biosynthesis; L-lysine biosynthesis via DAP pathway; DL-2,6-diaminopimelate from LL-2,6-diaminopimelate: step 1/1. Its function is as follows. Catalyzes the stereoinversion of LL-2,6-diaminopimelate (L,L-DAP) to meso-diaminopimelate (meso-DAP), a precursor of L-lysine and an essential component of the bacterial peptidoglycan. This chain is Diaminopimelate epimerase, found in Bacillus cereus (strain ATCC 10987 / NRS 248).